The following is a 145-amino-acid chain: 3-hydroxyacyl-[acyl-carrier-protein] dehydratase FabZ (145 aa).

Residue His51 is part of the active site.

Belongs to the thioester dehydratase family. FabZ subfamily.

The protein resides in the cytoplasm. It carries out the reaction a (3R)-hydroxyacyl-[ACP] = a (2E)-enoyl-[ACP] + H2O. Functionally, involved in unsaturated fatty acids biosynthesis. Catalyzes the dehydration of short chain beta-hydroxyacyl-ACPs and long chain saturated and unsaturated beta-hydroxyacyl-ACPs. The polypeptide is 3-hydroxyacyl-[acyl-carrier-protein] dehydratase FabZ (Staphylococcus carnosus (strain TM300)).